The chain runs to 1749 residues: Kinesin-like protein KIF13A (1749 aa).

In terms of domain architecture, Kinesin motor spans 5–352; that stretch reads KVKVAVRVRP…LRYADRAKRI (348 aa). An ATP-binding site is contributed by 102-109; the sequence is GQTGSGKS. Residues 359–431 are a coiled coil; that stretch reads NEDPNAKVIR…QERQRQLESM (73 aa). One can recognise an FHA domain in the interval 469 to 519; the sequence is HTRVGADTSQDIQLFGIGIQPEHCEIDIAADGDITLTPKENARSCVNGTLV. The stretch at 552-775 forms a coiled coil; sequence LKDFERETSS…VPEAKRLYGK (224 aa). 2 disordered regions span residues 633–652 and 834–853; these read QQLSPERQPPSSASDRLAYS and IPERMAEDDSSENSSESGSL. The residue at position 636 (serine 636) is a Phosphoserine. Residues 1086–1126 adopt a coiled-coil conformation; that stretch reads SDALIKRREYLDEQIKKVSNKKEKTEDDMEREARLVEQWVG. Position 1274 is a phosphoserine (serine 1274). The span at 1370 to 1383 shows a compositional bias: polar residues; the sequence is LSTPNVHNVSSSRP. 2 disordered regions span residues 1370 to 1402 and 1417 to 1436; these read LSTPNVHNVSSSRPDLSGFDEDDKGWPENQLDV and TLPRDSPRRSKEGCPSENPH. Residues 1421 to 1430 are compositionally biased toward basic and acidic residues; that stretch reads DSPRRSKEGC. Residues serine 1441, serine 1477, serine 1481, serine 1524, serine 1600, and serine 1650 each carry the phosphoserine modification. Positions 1475-1499 form a coiled coil; it reads LLSQEDSEEEENELEALSRKLMLTQ. Disordered stretches follow at residues 1584–1665 and 1698–1749; these read CAEP…GHQA and DFDG…TATR. The segment covering 1719 to 1741 has biased composition (basic and acidic residues); the sequence is ETDHKGIPERPPDADRLHPKIEN.

Belongs to the TRAFAC class myosin-kinesin ATPase superfamily. Kinesin family. Interacts with AP1G1 and AP1G2. Interacts with ZFYVE26. Interacts with AP2B1.

Its subcellular location is the golgi apparatus membrane. It localises to the cytoplasm. It is found in the cytoskeleton. The protein resides in the microtubule organizing center. The protein localises to the centrosome. Its subcellular location is the midbody. It localises to the endosome membrane. In terms of biological role, plus end-directed microtubule-dependent motor protein involved in intracellular transport and regulating various processes such as mannose-6-phosphate receptor (M6PR) transport to the plasma membrane, endosomal sorting during melanosome biogenesis and cytokinesis. During melanosome maturation, required for delivering melanogenic enzymes from recycling endosomes to nascent melanosomes by creating peripheral recycling endosomal subdomains in melanocytes. Also required for the abscission step in cytokinesis: mediates translocation of ZFYVE26, and possibly TTC19, to the midbody during cytokinesis. Mediates the transport of M6PR-containing vesicles from trans-Golgi network to the plasma membrane via direct interaction with the AP-1 complex. The sequence is that of Kinesin-like protein KIF13A (Kif13a) from Mus musculus (Mouse).